The following is a 215-amino-acid chain: MHDELVWIDCEMTGLDLGSDQLIEIAALVTDADLNILGDGVDVVIHIDSTALSSMIDVVAEMHSRSGLINEVESSIVDLVTAESIVLDYINNHVKQPKTAPLAGNSIATDRSFIARDMPTLDSFLHYRMIDVSSIKELCRRWYPRIYFGQPAKGLTHRALADIHESIRELRFYRRTAFVPPPGPSTREIAEVVADLSGTPATPGDIDSAYERPNG.

The 166-residue stretch at 5–170 (LVWIDCEMTG…ADIHESIREL (166 aa)) folds into the Exonuclease domain. Residue Tyr-127 is part of the active site.

This sequence belongs to the oligoribonuclease family.

The protein localises to the cytoplasm. 3'-to-5' exoribonuclease specific for small oligoribonucleotides. The sequence is that of Oligoribonuclease from Mycobacterium leprae (strain TN).